Reading from the N-terminus, the 233-residue chain is 7-cyano-7-deazaguanine synthase (233 aa).

8 to 18 contributes to the ATP binding site; it reads LSGGLDSTTCM. Residues cysteine 186, cysteine 194, cysteine 197, and cysteine 200 each coordinate Zn(2+).

Belongs to the QueC family. Homodimer. Requires Zn(2+) as cofactor.

It catalyses the reaction 7-carboxy-7-deazaguanine + NH4(+) + ATP = 7-cyano-7-deazaguanine + ADP + phosphate + H2O + H(+). It functions in the pathway purine metabolism; 7-cyano-7-deazaguanine biosynthesis. Its function is as follows. Catalyzes the ATP-dependent conversion of 7-carboxy-7-deazaguanine (CDG) to 7-cyano-7-deazaguanine (preQ(0)). The polypeptide is 7-cyano-7-deazaguanine synthase (Desulfitobacterium hafniense (strain DSM 10664 / DCB-2)).